The primary structure comprises 628 residues: 2-oxoacid:ferredoxin oxidoreductase 2, subunit alpha (628 aa).

The YPITP motif motif lies at 254 to 258 (YPITP). 2 residues coordinate substrate: Thr-257 and Arg-344.

As to quaternary structure, heterodimer composed of an alpha and a beta subunit.

The enzyme catalyses a 2-oxocarboxylate + 2 oxidized [2Fe-2S]-[ferredoxin] + CoA = an acyl-CoA + 2 reduced [2Fe-2S]-[ferredoxin] + CO2 + H(+). In terms of biological role, catalyzes the coenzyme A-dependent oxidative decarboxylation of different 2-oxoacids such as 2-oxoglutarate, pyruvate and 2-oxobutyrate to form their CoA derivatives. This is 2-oxoacid:ferredoxin oxidoreductase 2, subunit alpha from Sulfurisphaera tokodaii (strain DSM 16993 / JCM 10545 / NBRC 100140 / 7) (Sulfolobus tokodaii).